The primary structure comprises 492 residues: N-succinylglutamate 5-semialdehyde dehydrogenase (492 aa).

220–225 (GSANTG) contacts NAD(+). Active-site residues include Glu-243 and Cys-277.

This sequence belongs to the aldehyde dehydrogenase family. AstD subfamily.

The enzyme catalyses N-succinyl-L-glutamate 5-semialdehyde + NAD(+) + H2O = N-succinyl-L-glutamate + NADH + 2 H(+). Its pathway is amino-acid degradation; L-arginine degradation via AST pathway; L-glutamate and succinate from L-arginine: step 4/5. Its function is as follows. Catalyzes the NAD-dependent reduction of succinylglutamate semialdehyde into succinylglutamate. This is N-succinylglutamate 5-semialdehyde dehydrogenase from Escherichia coli O9:H4 (strain HS).